The chain runs to 310 residues: Ribosomal RNA large subunit methyltransferase F (310 aa).

Belongs to the methyltransferase superfamily. METTL16/RlmF family.

The protein resides in the cytoplasm. The catalysed reaction is adenosine(1618) in 23S rRNA + S-adenosyl-L-methionine = N(6)-methyladenosine(1618) in 23S rRNA + S-adenosyl-L-homocysteine + H(+). Specifically methylates the adenine in position 1618 of 23S rRNA. The chain is Ribosomal RNA large subunit methyltransferase F from Pseudoalteromonas translucida (strain TAC 125).